Consider the following 551-residue polypeptide: L-lactate permease (551 aa).

12 helical membrane passes run 13-33, 37-57, 69-89, 131-151, 159-179, 194-214, 244-264, 306-326, 366-386, 405-425, 438-458, and 530-550; these read NIWL…FALI, LKGY…ALLF, VVYG…AAVF, GAAG…GLGF, LCLI…PILV, MVGR…MAIM, FIGP…CLTL, FLFL…ALFA, FDWF…SIVW, LALP…SNYS, TGSA…FLTG, and IFTC…TWMI.

It belongs to the lactate permease family.

The protein localises to the cell inner membrane. It carries out the reaction (S)-lactate(in) + H(+)(in) = (S)-lactate(out) + H(+)(out). It catalyses the reaction (R)-lactate(in) + H(+)(in) = (R)-lactate(out) + H(+)(out). The catalysed reaction is glycolate(in) + H(+)(in) = glycolate(out) + H(+)(out). Uptake of L-lactate across the membrane. Can also transport D-lactate and glycolate. Seems to be driven by a proton motive force. This chain is L-lactate permease (lldP), found in Salmonella typhimurium (strain LT2 / SGSC1412 / ATCC 700720).